We begin with the raw amino-acid sequence, 354 residues long: Polyprenal reductase 1 (354 aa).

Helical transmembrane passes span 11-31 (PLLC…ALPI), 78-98 (FMHF…AIWF), 141-158 (YHVW…IQVL), 176-196 (MHIV…LSLA), 235-255 (PLLK…WGSL), and 301-321 (GMLV…VFVI).

Belongs to the steroid 5-alpha reductase family. Polyprenal reductase subfamily.

It is found in the cell membrane. It catalyses the reaction a di-trans,poly-cis-dolichal + NADP(+) = a di-trans,poly-cis-polyprenal + NADPH + H(+). Its pathway is protein modification; protein glycosylation. Functionally, plays a key role in early steps of protein N-linked glycosylation by being involved in the conversion of polyprenol into dolichol. Acts as a polyprenal reductase that mediates the reduction of polyprenal into dolichal in a NADP-dependent mechanism. Dolichols are required for the synthesis of dolichol-linked monosaccharides and the oligosaccharide precursor used for N-glycosylation. The protein is Polyprenal reductase 1 of Oryza sativa subsp. indica (Rice).